Reading from the N-terminus, the 1341-residue chain is MERYEIPKEIGEIMFGLLSPDYIRQMSVAKIVTPDTYDEDGYPIDGGLMDTRLGVIDPGLVCKTCGGRIGECPGHFGHIELAKPVIHIGFAKTIYKILKAVCPHCGRVAISETKRKEILEKMEKLERDGGNKWEVCEEVYKEASKVTICPHCGEIKYDIKFEKPTTYYRIDGNEEKTLTPSDVREILEKIPDEDCILLGLNPEVARPEWMVLTVLPVPPVTVRPSITLETGERSEDDLTHKLVDIIRINNRLEENIEGGAPNLIIEDLWNLLQYHVNTYFDNEAPGIPPAKHRSGRPLKTLAQRLKGKEGRFRYNLAGKRVNFSSRTVISPDPCLSINEVGVPEVVAKELTVPEKVTKYNIERIRQLLRNGSEKHPGVNYVIRKMIGRDGTEQEYKVKITESNKDFWAENIREGDIVERHLMDGDIVLYNRQPSLHRMSIMAHRVRVLPYRTFRHNLCVCVDGDTTVLLDGKLIKIKDLEDKWKDVKVLTSDDLNPKLTSLSKYWKLNADEYGKKIYKIKTELGREIIATEDHPFYTTNGRKRCGELKVGDEVIIYPNDFPMFEDDNRVIVDEEKIKKVINNIGGTYKNKIINELKDRKLIPLTYNDQKASILARIVGHVMGDGSLIINNKNSRVVFRGDIEDLKTIKEDLKELGYDGEEIKLHEGETEITDYNGKKRIIKGKGYSFEVRKKSLCILLKALGCVGGDKTKKMYGIPNWIKTAPKYIKKEFLSAYFGSELTTPKIRNHGTSFKELSFKIAKIEEIFDEDRFIKDIKEMLKEFGIELKVRVEEGNLRKDGYKTKVYVASIYNHKEFFGRIGYTYANKKETLARYAYEYLLTKEKYLKDRNIKKLENNTKFITFDKFIKEKCLKNGFVKEKIVSIEETKVDYVYDITTISETHNFIANGFLTGNCPPYNADFDGDEMNLHVPQSEEARAEAEALMLVEKHILSPRFGGPIIGAIHDFISGAYLLTSNYFTKDEATLILRSGGIKDELWEPDKVENGVPLYSGKKIFSKALPKGLNLRYKAKICRKCDVCKKEECEYDAYVVIKDGELIKGVIDKNGYGAEAGLILHTIVKEFGPEAGRKFLDSATKMAIRAVMLRGFTTGIDDEDLPEEALKEIEKVLDEAEEKVKEIIEKYERGELELLPGLNLEESREAYISNVLREARDKAGAIAERYLGLDNHAVIMAVTGARGNILNLTQMAACLGQQSVRGKRIFRGYRGRVLPHFEKGDLGARSHGFVRSSYKKGLSPTEFFFHAMGGREGLVDQAVRTAQSGYMQRRLINALQDLKTEFDGTVRDSRGIMIQFKYGEDGIDPMLADRGKAVNIDRIIDKVKMKYNQ.

8 residues coordinate Zn(2+): Cys-62, Cys-65, Cys-72, His-75, Cys-102, Cys-105, Cys-149, and Cys-152. Residues Asp-918, Asp-920, and Asp-922 each contribute to the Mg(2+) site.

This sequence belongs to the RNA polymerase beta' chain family. Part of the RNA polymerase complex. Requires Mg(2+) as cofactor. Zn(2+) is required as a cofactor. Post-translationally, this protein undergoes a protein self splicing that involves a post-translational excision of the intervening region (intein) followed by peptide ligation.

The protein localises to the cytoplasm. The catalysed reaction is RNA(n) + a ribonucleoside 5'-triphosphate = RNA(n+1) + diphosphate. In terms of biological role, DNA-dependent RNA polymerase (RNAP) catalyzes the transcription of DNA into RNA using the four ribonucleoside triphosphates as substrates. Forms the clamp head domain. The chain is DNA-directed RNA polymerase subunit Rpo1N from Methanocaldococcus jannaschii (strain ATCC 43067 / DSM 2661 / JAL-1 / JCM 10045 / NBRC 100440) (Methanococcus jannaschii).